Consider the following 291-residue polypeptide: ATP synthase gamma chain (291 aa).

Belongs to the ATPase gamma chain family. In terms of assembly, F-type ATPases have 2 components, CF(1) - the catalytic core - and CF(0) - the membrane proton channel. CF(1) has five subunits: alpha(3), beta(3), gamma(1), delta(1), epsilon(1). CF(0) has three main subunits: a, b and c.

It is found in the cell inner membrane. In terms of biological role, produces ATP from ADP in the presence of a proton gradient across the membrane. The gamma chain is believed to be important in regulating ATPase activity and the flow of protons through the CF(0) complex. This chain is ATP synthase gamma chain, found in Rhodopseudomonas palustris (strain BisB5).